The primary structure comprises 439 residues: Chromosomal replication initiator protein DnaA (439 aa).

Residues 1–75 (MESWSRCLER…GIREVVLAIG (75 aa)) form a domain I, interacts with DnaA modulators region. A domain II region spans residues 75–101 (GSRPKTTELTVPVDTTGRLSQTVPFNG). The segment at 102–319 (NLDTHYNFDN…GALNTLVARA (218 aa)) is domain III, AAA+ region. 4 residues coordinate ATP: Gly147, Gly149, Lys150, and Thr151. Positions 320 to 439 (NFTGRAVTIE…WDKLMRKFSE (120 aa)) are domain IV, binds dsDNA.

Belongs to the DnaA family. As to quaternary structure, oligomerizes as a right-handed, spiral filament on DNA at oriC.

The protein resides in the cytoplasm. In terms of biological role, plays an essential role in the initiation and regulation of chromosomal replication. ATP-DnaA binds to the origin of replication (oriC) to initiate formation of the DNA replication initiation complex once per cell cycle. Binds the DnaA box (a 9 base pair repeat at the origin) and separates the double-stranded (ds)DNA. Forms a right-handed helical filament on oriC DNA; dsDNA binds to the exterior of the filament while single-stranded (ss)DNA is stabiized in the filament's interior. The ATP-DnaA-oriC complex binds and stabilizes one strand of the AT-rich DNA unwinding element (DUE), permitting loading of DNA polymerase. After initiation quickly degrades to an ADP-DnaA complex that is not apt for DNA replication. Binds acidic phospholipids. The chain is Chromosomal replication initiator protein DnaA from Xylella fastidiosa (strain Temecula1 / ATCC 700964).